A 102-amino-acid polypeptide reads, in one-letter code: Heat shock protein HspQ (102 aa).

This sequence belongs to the HspQ family.

The protein localises to the cytoplasm. Involved in the degradation of certain denaturated proteins, including DnaA, during heat shock stress. In Pectobacterium atrosepticum (strain SCRI 1043 / ATCC BAA-672) (Erwinia carotovora subsp. atroseptica), this protein is Heat shock protein HspQ.